Consider the following 545-residue polypeptide: Pseudouridylate synthase RPUSD2 (545 aa).

The segment at 48–121 (GLRASHQQNG…PPPKKRRTGV (74 aa)) is disordered. At Ser-68 the chain carries Phosphoserine. Residue Asp-274 is part of the active site. Residue Thr-477 is modified to Phosphothreonine.

This sequence belongs to the pseudouridine synthase RluA family.

It catalyses the reaction a uridine in mRNA = a pseudouridine in mRNA. Pseudouridine synthase that catalyzes pseudouridylation of mRNAs. The sequence is that of Pseudouridylate synthase RPUSD2 from Homo sapiens (Human).